The sequence spans 640 residues: Choline O-acetyltransferase (640 aa).

Basic and acidic residues predominate over residues Met1–Ala22. Residues Met1 to Val28 are disordered. Residue His334 is the Proton acceptor of the active site. CoA-binding positions include Gly412–Asp424, Ser450, and Gln551.

It belongs to the carnitine/choline acetyltransferase family. Detected in brain and in embryonic retina.

It catalyses the reaction choline + acetyl-CoA = acetylcholine + CoA. Catalyzes the reversible synthesis of acetylcholine (ACh) from acetyl CoA and choline at cholinergic synapses. In Gallus gallus (Chicken), this protein is Choline O-acetyltransferase (CHAT).